The sequence spans 387 residues: Oxidase FUB9 (387 aa).

The interval 1–20 (MSRTNLPIQPAKMSDATSSK) is disordered. The FMN hydroxy acid dehydrogenase domain occupies 18 to 379 (SSKPQIFSIQ…TPAHLSLLNA (362 aa)). Tyr-44 lines the a 2-oxocarboxylate pocket. FMN contacts are provided by Ser-126, Gln-150, and Thr-178. Arg-187 contributes to the a 2-oxocarboxylate binding site. Position 250 (Lys-250) interacts with FMN. The Proton acceptor role is filled by His-274. A 2-oxocarboxylate is bound at residue Arg-277. FMN contacts are provided by residues 305 to 309 (DGGFR) and 328 to 329 (GR).

The protein belongs to the FMN-dependent alpha-hydroxy acid dehydrogenase family. The cofactor is FMN.

Its pathway is mycotoxin biosynthesis. Functionally, oxidase; part of the gene cluster that mediates the biosynthesis of fusaric acid, a mycotoxin with low to moderate toxicity to animals and humans, but with high phytotoxic properties. L-aspartate is suggested as fusaric acid amino acid precursor that is activated and further processed to O-acetyl-L-homoserine by cluster enzymes aspartate kinase FUB3 and homoserine O-acetyltransferase FUB5, as well as enzymes of the primary metabolism. The polyketide synthase (PKS) FUB1 generates the triketide trans-2-hexenal which is presumptively released by the hydrolase FUB4 and linked to the NRPS-bound amino acid precursor by NAD(P)-dependent dehydrogenase FUB6. FUB1, FUB4, and the non-canonical NRPS Fub8 may form an enzyme complex. Further processing of the NRPS-bound intermediate might be carried out by FUB6 and the sulfhydrylase FUB7, enabling a spontaneous electrocyclization to close the carbon backbone of fusaric acid. Dihydrofusaric acid is likely to be released via reduction by the thioester reductase (TR) domain of FUB8 whereupon the final oxidation to fusaric acid may (also) be performed by the FMN-dependent dehydrogenase FUB9. This is Oxidase FUB9 from Gibberella moniliformis (strain M3125 / FGSC 7600) (Maize ear and stalk rot fungus).